Here is a 43-residue protein sequence, read N- to C-terminus: MEGINFSALAPRYGSRPMLSSWSDIGTSSMNGGAFNWGSLWSG.

The propeptide occupies 1-33 (MEGINFSALAPRYGSRPMLSSWSDIGTSSMNGG).

The protein belongs to the adenoviridae protein VI family. As to quaternary structure, interacts with hexon protein; this interaction allows nuclear import of hexon trimers and possibly pre-capsid assembly. Interacts (via C-terminal NLS) with importin alpha/beta. In terms of assembly, interacts (via PPxY motif) with host NEDD4 ubiquitine ligase; this interaction might play a role in virus intracellular transport during entry. Part of a complex composed of the core-capsid bridging protein, the endosome lysis protein VI and the hexon-linking protein VIII; these interactions bridge the virus core to the capsid. Interacts with peripentonal hexons; this interaction stabilizes the capsid by gluing two peripentonal hexons together and joining them with an adjacent group-of-nine hexon. Protease cofactor: Heterodimer with the viral protease; disulfide-linked. Interacts with the viral protease. In terms of processing, ubiquitinated by Nedd4 following partial capsid disassembly; which might play a role in intracellular virus movement during entry. Post-translationally, protease cofactor: Contains the major nuclear import and export signals. Proteolytically removed during virion maturation. The processing of the C-terminus turns the precursor into a mature viral structural protein and abrogates its ability to promote hexon import and act as a potential chaperone protein.

It is found in the host nucleus. It localises to the host cytoplasm. Its subcellular location is the virion. Functionally, during virus assembly, promotes hexon trimers nuclear import through nuclear pore complexes via an importin alpha/beta-dependent mechanism. By analogy to herpesviruses capsid assembly, might act as a chaperone to promote the formation of the icosahedral capsid. In terms of biological role, structural component of the virion that provides increased stability to the particle shell through its interaction with the core-capsid bridging protein and the hexon-linking protein VIII. Fibers shedding during virus entry into host cell allows the endosome lysis protein to be exposed as a membrane-lytic peptide. Exhibits pH-independent membrane fragmentation activity and probably mediates viral rapid escape from host endosome via organellar membrane lysis. It is not clear if it then remains partially associated with the capsid and involved in the intracellular microtubule-dependent transport of capsid to the nucleus, or if it is lost during endosomal penetration. This is Pre-protein VI from Bovine adenovirus 2 (BAdV-2).